The following is a 115-amino-acid chain: MHALDALDALSIKADIPDFSPGDTVRVYVNITEGDRSRVQVFQGVVIARRGFGVRQTFTVRKISFQVGVERIFPLHSPSINRIEVVTKGSVRRAKLYYIRKLRGKKAKVKQKREL.

It belongs to the bacterial ribosomal protein bL19 family.

In terms of biological role, this protein is located at the 30S-50S ribosomal subunit interface and may play a role in the structure and function of the aminoacyl-tRNA binding site. This chain is Large ribosomal subunit protein bL19, found in Tropheryma whipplei (strain TW08/27) (Whipple's bacillus).